Reading from the N-terminus, the 191-residue chain is Elongation factor P 1 (191 aa).

The protein belongs to the elongation factor P family.

Its subcellular location is the cytoplasm. The protein operates within protein biosynthesis; polypeptide chain elongation. Functionally, involved in peptide bond synthesis. Stimulates efficient translation and peptide-bond synthesis on native or reconstituted 70S ribosomes in vitro. Probably functions indirectly by altering the affinity of the ribosome for aminoacyl-tRNA, thus increasing their reactivity as acceptors for peptidyl transferase. This is Elongation factor P 1 from Lactobacillus acidophilus (strain ATCC 700396 / NCK56 / N2 / NCFM).